We begin with the raw amino-acid sequence, 218 residues long: MARKKVRPRLIAELARRVRALREQLNRPRDSQLYAVDYETLTRPFSGRRLPVRAWADVRRESRLLQLLGRLPLFGLGRLVTRKSWLWQHDEPCYWRLTRVRPDYTAQNLDHGKAWGILTFKGKTESEAREIEHVMYHDWRLVPKHEEEAFTAFTPAPEDSLASVPYPPLLRAMIIAERQKNGDTSTEEPMLNVQRIRMEPWDYPAKQEDKGRAKGTPV.

The segment at 180–218 is disordered; it reads KNGDTSTEEPMLNVQRIRMEPWDYPAKQEDKGRAKGTPV. Residues 196 to 212 show a composition bias toward basic and acidic residues; it reads IRMEPWDYPAKQEDKGR.

The protein belongs to the mitochondrion-specific ribosomal protein mS34 family. In terms of assembly, component of the mitochondrial small ribosomal subunit (mt-SSU). Mature mammalian 55S mitochondrial ribosomes consist of a small (28S) and a large (39S) subunit. The 28S small subunit contains a 12S ribosomal RNA (12S mt-rRNA) and 30 different proteins. The 39S large subunit contains a 16S rRNA (16S mt-rRNA), a copy of mitochondrial valine transfer RNA (mt-tRNA(Val)), which plays an integral structural role, and 52 different proteins.

It localises to the mitochondrion. In terms of biological role, required for mitochondrial translation, plays a role in maintaining the stability of the small ribosomal subunit and the 12S rRNA that are required for mitoribosome formation. In Homo sapiens (Human), this protein is Small ribosomal subunit protein mS34 (MRPS34).